A 198-amino-acid polypeptide reads, in one-letter code: Recombination protein RecR (198 aa).

The segment at 57–72 adopts a C4-type zinc-finger fold; it reads CSVCGHITENDPCYIC. The region spanning 80–175 is the Toprim domain; that stretch reads SVICVVEDDK…KVTRLAQGLS (96 aa).

This sequence belongs to the RecR family.

In terms of biological role, may play a role in DNA repair. It seems to be involved in an RecBC-independent recombinational process of DNA repair. It may act with RecF and RecO. The polypeptide is Recombination protein RecR (Staphylococcus aureus (strain MSSA476)).